We begin with the raw amino-acid sequence, 340 residues long: KRR1 small subunit processome component homolog (340 aa).

A KH domain is found at Asp-124–Asn-192. Basic residues predominate over residues Lys-228–Lys-244. Disordered stretches follow at residues Lys-228 to Ile-259 and Asn-271 to Val-324. A coiled-coil region spans residues Phe-269–Phe-302. Composition is skewed to basic and acidic residues over residues Lys-275 to Asp-301 and Ala-309 to Val-324.

Belongs to the KRR1 family. Monomer. Component of the ribosomal small subunit (SSU) processome.

It localises to the nucleus. It is found in the nucleolus. In terms of biological role, required for 40S ribosome biogenesis. Involved in nucleolar processing of pre-18S ribosomal RNA and ribosome assembly. Binds to RNA. Required for female germline development, cell viability during eye development and for survival of dividing cells and epithelial cells during early wing disk development. This Drosophila persimilis (Fruit fly) protein is KRR1 small subunit processome component homolog.